A 174-amino-acid chain; its full sequence is NADH-ubiquinone oxidoreductase chain 6 (174 aa).

Transmembrane regions (helical) follow at residues 24–44 (LAMG…TGLM), 48–68 (FWFS…LFIY), 82–102 (MKLT…NILL), and 143–163 (LMTI…VKIT).

It belongs to the complex I subunit 6 family.

Its subcellular location is the mitochondrion membrane. The enzyme catalyses a ubiquinone + NADH + 5 H(+)(in) = a ubiquinol + NAD(+) + 4 H(+)(out). Functionally, core subunit of the mitochondrial membrane respiratory chain NADH dehydrogenase (Complex I) that is believed to belong to the minimal assembly required for catalysis. Complex I functions in the transfer of electrons from NADH to the respiratory chain. The immediate electron acceptor for the enzyme is believed to be ubiquinone. The polypeptide is NADH-ubiquinone oxidoreductase chain 6 (ND6) (Ceratitis capitata (Mediterranean fruit fly)).